We begin with the raw amino-acid sequence, 206 residues long: dITP/XTP pyrophosphatase (206 aa).

10–15 (SRNAKK) is a substrate binding site. Asp75 serves as the catalytic Proton acceptor. Asp75 is a binding site for Mg(2+). Substrate is bound by residues Ser76, 158 to 161 (FGYD), Lys181, and 186 to 187 (HR).

The protein belongs to the HAM1 NTPase family. Homodimer. It depends on Mg(2+) as a cofactor.

It carries out the reaction XTP + H2O = XMP + diphosphate + H(+). The catalysed reaction is dITP + H2O = dIMP + diphosphate + H(+). The enzyme catalyses ITP + H2O = IMP + diphosphate + H(+). In terms of biological role, pyrophosphatase that catalyzes the hydrolysis of nucleoside triphosphates to their monophosphate derivatives, with a high preference for the non-canonical purine nucleotides XTP (xanthosine triphosphate), dITP (deoxyinosine triphosphate) and ITP. Seems to function as a house-cleaning enzyme that removes non-canonical purine nucleotides from the nucleotide pool, thus preventing their incorporation into DNA/RNA and avoiding chromosomal lesions. This is dITP/XTP pyrophosphatase from Nocardia farcinica (strain IFM 10152).